The primary structure comprises 199 residues: Recombination protein RecR (199 aa).

The segment at 57 to 72 adopts a C4-type zinc-finger fold; that stretch reads CQSCRTFTEQDLCPIC. The Toprim domain occupies 81 to 176; the sequence is GIICVVETPA…VISRIAHGVP (96 aa).

It belongs to the RecR family.

May play a role in DNA repair. It seems to be involved in an RecBC-independent recombinational process of DNA repair. It may act with RecF and RecO. This is Recombination protein RecR from Shewanella frigidimarina (strain NCIMB 400).